Reading from the N-terminus, the 378-residue chain is Cobalt-precorrin-5B C(1)-methyltransferase (378 aa).

It belongs to the CbiD family.

The catalysed reaction is Co-precorrin-5B + S-adenosyl-L-methionine = Co-precorrin-6A + S-adenosyl-L-homocysteine. It functions in the pathway cofactor biosynthesis; adenosylcobalamin biosynthesis; cob(II)yrinate a,c-diamide from sirohydrochlorin (anaerobic route): step 6/10. Catalyzes the methylation of C-1 in cobalt-precorrin-5B to form cobalt-precorrin-6A. The chain is Cobalt-precorrin-5B C(1)-methyltransferase from Photorhabdus laumondii subsp. laumondii (strain DSM 15139 / CIP 105565 / TT01) (Photorhabdus luminescens subsp. laumondii).